A 247-amino-acid chain; its full sequence is Ubiquinone biosynthesis O-methyltransferase (247 aa).

The S-adenosyl-L-methionine site is built by Arg-41, Gly-72, Asp-93, and Met-136.

Belongs to the methyltransferase superfamily. UbiG/COQ3 family.

The enzyme catalyses a 3-demethylubiquinol + S-adenosyl-L-methionine = a ubiquinol + S-adenosyl-L-homocysteine + H(+). It catalyses the reaction a 3-(all-trans-polyprenyl)benzene-1,2-diol + S-adenosyl-L-methionine = a 2-methoxy-6-(all-trans-polyprenyl)phenol + S-adenosyl-L-homocysteine + H(+). The protein operates within cofactor biosynthesis; ubiquinone biosynthesis. O-methyltransferase that catalyzes the 2 O-methylation steps in the ubiquinone biosynthetic pathway. The chain is Ubiquinone biosynthesis O-methyltransferase from Bartonella tribocorum (strain CIP 105476 / IBS 506).